Consider the following 151-residue polypeptide: MRRRARELAMRALFAHTVGGMGLEEAFQHALEEMGGEEEGYAEPLDQEGVAFARRLLSGYKAHQEEVDRVLEETVEGWDFRQMAKTDLAVLRLAVYEMLYEPTPFEPLIEVAVKIANRYGGEHSGSFVNGVLARVYRRVAAGELKTVAKEA.

Belongs to the NusB family.

Functionally, involved in transcription antitermination. Required for transcription of ribosomal RNA (rRNA) genes. Binds specifically to the boxA antiterminator sequence of the ribosomal RNA (rrn) operons. The protein is Transcription antitermination protein NusB of Thermus thermophilus (strain ATCC BAA-163 / DSM 7039 / HB27).